The chain runs to 382 residues: Methylthioribose-1-phosphate isomerase (382 aa).

Catalysis depends on Asp-257, which acts as the Proton donor.

The protein belongs to the eIF-2B alpha/beta/delta subunits family. MtnA subfamily.

It is found in the cytoplasm. Its subcellular location is the nucleus. The enzyme catalyses 5-(methylsulfanyl)-alpha-D-ribose 1-phosphate = 5-(methylsulfanyl)-D-ribulose 1-phosphate. It functions in the pathway amino-acid biosynthesis; L-methionine biosynthesis via salvage pathway; L-methionine from S-methyl-5-thio-alpha-D-ribose 1-phosphate: step 1/6. In terms of biological role, catalyzes the interconversion of methylthioribose-1-phosphate (MTR-1-P) into methylthioribulose-1-phosphate (MTRu-1-P). The chain is Methylthioribose-1-phosphate isomerase from Paracoccidioides brasiliensis (strain Pb18).